The following is a 324-amino-acid chain: tRNA N6-adenosine threonylcarbamoyltransferase (324 aa).

Fe cation is bound by residues His107, His111, and Tyr127. Substrate is bound by residues 127–131 (YVSGG), Asp159, Gly172, Glu176, and Asn257. Fe cation is bound at residue Asp285.

The protein belongs to the KAE1 / TsaD family. As to quaternary structure, monomer. Component of the KEOPS complex that consists of Kae1, Bud32, Cgi121 and Pcc1; the whole complex dimerizes. The cofactor is Fe(2+).

The protein localises to the cytoplasm. It catalyses the reaction L-threonylcarbamoyladenylate + adenosine(37) in tRNA = N(6)-L-threonylcarbamoyladenosine(37) in tRNA + AMP + H(+). Its function is as follows. Required for the formation of a threonylcarbamoyl group on adenosine at position 37 (t(6)A37) in tRNAs that read codons beginning with adenine. Is a component of the KEOPS complex that is probably involved in the transfer of the threonylcarbamoyl moiety of threonylcarbamoyl-AMP (TC-AMP) to the N6 group of A37. Kae1 likely plays a direct catalytic role in this reaction, but requires other protein(s) of the complex to fulfill this activity. In vitro, binds tRNA, ssRNA, both single- and double-stranded DNA, and exhibits a low ATPase activity. This is tRNA N6-adenosine threonylcarbamoyltransferase from Pyrococcus abyssi (strain GE5 / Orsay).